The chain runs to 208 residues: Somatotropin-B (208 aa).

A signal peptide spans 1–25; it reads MVPGSCSSFGLLVILSFQNVPDVGG. Zn(2+) is bound at residue H44. C77 and C181 form a disulfide bridge. E190 lines the Zn(2+) pocket. C198 and C206 are disulfide-bonded.

The protein belongs to the somatotropin/prolactin family.

Its subcellular location is the secreted. In terms of biological role, growth hormone plays an important role in growth control. The sequence is that of Somatotropin-B (gh-b) from Xenopus laevis (African clawed frog).